Here is a 102-residue protein sequence, read N- to C-terminus: MICOS complex subunit MIC12 (102 aa).

A helical membrane pass occupies residues 4–26 (VLKLTSVTLAASSLAAAGYFYAF).

Belongs to the MICOS complex subunit Mic12 family. In terms of assembly, component of the mitochondrial contact site and cristae organizing system (MICOS) complex.

The protein resides in the mitochondrion inner membrane. Its function is as follows. Component of the MICOS complex, a large protein complex of the mitochondrial inner membrane that plays crucial roles in the maintenance of crista junctions, inner membrane architecture, and formation of contact sites to the outer membrane. The chain is MICOS complex subunit MIC12 (AIM5) from Lachancea thermotolerans (strain ATCC 56472 / CBS 6340 / NRRL Y-8284) (Yeast).